The following is a 192-amino-acid chain: Peptidyl-tRNA hydrolase (192 aa).

Residue Tyr14 coordinates tRNA. Residue His19 is the Proton acceptor of the active site. Residues Tyr64, Asn66, and Asn112 each coordinate tRNA.

This sequence belongs to the PTH family. As to quaternary structure, monomer.

It localises to the cytoplasm. The enzyme catalyses an N-acyl-L-alpha-aminoacyl-tRNA + H2O = an N-acyl-L-amino acid + a tRNA + H(+). Hydrolyzes ribosome-free peptidyl-tRNAs (with 1 or more amino acids incorporated), which drop off the ribosome during protein synthesis, or as a result of ribosome stalling. Its function is as follows. Catalyzes the release of premature peptidyl moieties from peptidyl-tRNA molecules trapped in stalled 50S ribosomal subunits, and thus maintains levels of free tRNAs and 50S ribosomes. This is Peptidyl-tRNA hydrolase from Prosthecochloris aestuarii (strain DSM 271 / SK 413).